A 392-amino-acid polypeptide reads, in one-letter code: 23S rRNA (uracil(747)-C(5))-methyltransferase RlmC (392 aa).

[4Fe-4S] cluster-binding residues include cysteine 4, cysteine 12, cysteine 15, and cysteine 93. S-adenosyl-L-methionine-binding residues include glutamine 218, phenylalanine 247, glutamate 275, and asparagine 321. Catalysis depends on cysteine 348, which acts as the Nucleophile.

Belongs to the class I-like SAM-binding methyltransferase superfamily. RNA M5U methyltransferase family. RlmC subfamily.

It carries out the reaction uridine(747) in 23S rRNA + S-adenosyl-L-methionine = 5-methyluridine(747) in 23S rRNA + S-adenosyl-L-homocysteine + H(+). In terms of biological role, catalyzes the formation of 5-methyl-uridine at position 747 (m5U747) in 23S rRNA. The chain is 23S rRNA (uracil(747)-C(5))-methyltransferase RlmC from Haemophilus influenzae (strain PittGG).